The sequence spans 204 residues: Guanylate kinase (204 aa).

The region spanning Gly-3 to Arg-181 is the Guanylate kinase-like domain. Ala-10 to Thr-17 provides a ligand contact to ATP.

Belongs to the guanylate kinase family.

The protein localises to the cytoplasm. The enzyme catalyses GMP + ATP = GDP + ADP. Essential for recycling GMP and indirectly, cGMP. This is Guanylate kinase from Aromatoleum aromaticum (strain DSM 19018 / LMG 30748 / EbN1) (Azoarcus sp. (strain EbN1)).